We begin with the raw amino-acid sequence, 498 residues long: Zinc finger protein 79 (498 aa).

Positions 1-23 (MLEEGVLPSPGPALPQEENTGEE) are disordered. Residues 38 to 109 (TFFSSVTVAF…EGEDLRSPSP (72 aa)) form the KRAB domain. 11 consecutive C2H2-type zinc fingers follow at residues 193–215 (YACN…QKSH), 221–243 (YECS…QRIH), 249–271 (YKCS…QRTH), 277–299 (YRCS…QRIH), 305–327 (YECS…QRTH), 333–355 (YKCS…QRIH), 361–383 (YRCA…QRTH), 389–411 (YKCS…QKTH), 417–439 (YKCN…HIIH), 445–467 (YECN…QRIH), and 473–495 (YECS…QRLH).

It belongs to the krueppel C2H2-type zinc-finger protein family.

It is found in the nucleus. Functionally, may be involved in transcriptional regulation. The chain is Zinc finger protein 79 (ZNF79) from Homo sapiens (Human).